We begin with the raw amino-acid sequence, 207 residues long: Porin MspD (207 aa).

An N-terminal signal peptide occupies residues 1–24 (MRYLVMMFALLVSVTLVSPRPANA).

This sequence belongs to the mycobacterial porin (TC 1.B.24) family. In terms of assembly, octamers. Probably forms a goblet with the wide end on the exterior of the outer membrane and a central channel. It is not known if mixed oligomers of MspD with other Msp subunits form in vivo.

It is found in the cell outer membrane. The protein localises to the secreted. Its subcellular location is the cell wall. A backup porin induced when MspA, the major porin, is deleted. It probably forms a water-filled channel which favors the permeation of cations. There are about 2400 porins in wild-type, 800 in an mspA deletion and 150 in a double mspA-mspC deletion. In Mycolicibacterium smegmatis (strain ATCC 700084 / mc(2)155) (Mycobacterium smegmatis), this protein is Porin MspD (mspD).